The primary structure comprises 424 residues: Tyrosine--tRNA ligase (424 aa).

Residue Y37 participates in L-tyrosine binding. The 'HIGH' region signature appears at 42–51; sequence PTADSLHLGH. 2 residues coordinate L-tyrosine: Y175 and Q179. Residues 235–239 carry the 'KMSKS' region motif; the sequence is KFGKT. Position 238 (K238) interacts with ATP. One can recognise an S4 RNA-binding domain in the interval 357 to 414; that stretch reads ADLQQALVNAELVPSRGQARTMIGSNAVAINGEKQADPEYVFTDADRLFGRYTLLRRG.

It belongs to the class-I aminoacyl-tRNA synthetase family. TyrS type 1 subfamily. Homodimer.

It is found in the cytoplasm. It carries out the reaction tRNA(Tyr) + L-tyrosine + ATP = L-tyrosyl-tRNA(Tyr) + AMP + diphosphate + H(+). In terms of biological role, catalyzes the attachment of tyrosine to tRNA(Tyr) in a two-step reaction: tyrosine is first activated by ATP to form Tyr-AMP and then transferred to the acceptor end of tRNA(Tyr). This is Tyrosine--tRNA ligase from Yersinia pseudotuberculosis serotype O:1b (strain IP 31758).